The chain runs to 219 residues: Probable transaldolase (219 aa).

The active-site Schiff-base intermediate with substrate is Lys83.

This sequence belongs to the transaldolase family. Type 3B subfamily.

It localises to the cytoplasm. The catalysed reaction is D-sedoheptulose 7-phosphate + D-glyceraldehyde 3-phosphate = D-erythrose 4-phosphate + beta-D-fructose 6-phosphate. The protein operates within carbohydrate degradation; pentose phosphate pathway; D-glyceraldehyde 3-phosphate and beta-D-fructose 6-phosphate from D-ribose 5-phosphate and D-xylulose 5-phosphate (non-oxidative stage): step 2/3. Its function is as follows. Transaldolase is important for the balance of metabolites in the pentose-phosphate pathway. The protein is Probable transaldolase of Cereibacter sphaeroides (strain ATCC 17025 / ATH 2.4.3) (Rhodobacter sphaeroides).